We begin with the raw amino-acid sequence, 92 residues long: Transcriptional regulator WhiB1 (92 aa).

The 4Fe-4S Wbl-type domain occupies 12–74 (ACRDKDPELF…GGLSEDERRA (63 aa)). [4Fe-4S] cluster-binding residues include Cys13, Cys41, Cys44, and Cys50.

The protein belongs to the WhiB family. [4Fe-4S] cluster is required as a cofactor. Post-translationally, the Fe-S cluster can be nitrosylated by nitric oxide (NO). Upon Fe-S cluster removal intramolecular disulfide bonds are formed.

It localises to the cytoplasm. Acts as a transcriptional regulator. Probably redox-responsive. The apo- but not holo-form probably binds DNA. The polypeptide is Transcriptional regulator WhiB1 (whiB1) (Bifidobacterium longum (strain NCC 2705)).